Here is a 135-residue protein sequence, read N- to C-terminus: Class I hydrophobin dewA (135 aa).

An N-terminal signal peptide occupies residues 1 to 18 (MRFIVSLLAFTAAATATA). 4 disulfides stabilise this stretch: cysteine 44–cysteine 114, cysteine 51–cysteine 108, cysteine 52–cysteine 84, and cysteine 115–cysteine 122. The N-linked (GlcNAc...) asparagine glycan is linked to asparagine 60.

It belongs to the fungal hydrophobin family. As to quaternary structure, forms homodimers at high concentrations, and these dimers are off-pathway to rodlet formation. Dissociation of the dimers into monomers, with resultant exposure of the hydrophobic face, is necessary for self-assembly to form functional amyloid fibrils called rodlets. Self-assembly into fibrillar rodlets occurs spontaneously at hydrophobic:hydrophilic interfaces and the rodlets further associate laterally to form amphipathic monolayers.

It is found in the secreted. It localises to the spore wall. In terms of biological role, aerial growth, conidiation, and dispersal of filamentous fungi in the environment rely upon a capability of their secreting small amphipathic proteins called hydrophobins (HPBs) with low sequence identity. Class I can self-assemble into an outermost layer of rodlet bundles on aerial cell surfaces, conferring cellular hydrophobicity that supports fungal growth, development and dispersal; whereas Class II form highly ordered films at water-air interfaces through intermolecular interactions but contribute nothing to the rodlet structure. DewA is a class I hydrophobin that contributes to spore wall hydrophobicity. The protein is Class I hydrophobin dewA of Emericella nidulans (strain FGSC A4 / ATCC 38163 / CBS 112.46 / NRRL 194 / M139) (Aspergillus nidulans).